Here is a 184-residue protein sequence, read N- to C-terminus: Autophagy-related protein 101 (184 aa).

This sequence belongs to the ATG101 family. In terms of assembly, component of the atg1 kinase complex composed of at least atg1, atg13, atg17 and atg101. Interacts directly with atg13.

It localises to the cytoplasm. It is found in the nucleus. Its subcellular location is the preautophagosomal structure membrane. Its function is as follows. Autophagy factor required for autophagosome formation. Component of the atg1 kinase complex in which it stabilizes atg13. Is also responsible for recruiting downstream factors to the autophagosome-formation site. Has a role in meiosis and sporulation. This is Autophagy-related protein 101 from Schizosaccharomyces pombe (strain 972 / ATCC 24843) (Fission yeast).